The sequence spans 93 residues: Zinc metalloproteinase-disintegrin-like leucurogin (93 aa).

The 86-residue stretch at 8–93 (PPVCGNELLE…SECPADVGHK (86 aa)) folds into the Disintegrin domain. The Ca(2+) site is built by valine 10, asparagine 13, leucine 15, glutamate 17, glutamate 20, and aspartate 23. 7 disulfides stabilise this stretch: cysteine 11–cysteine 40, cysteine 22–cysteine 35, cysteine 24–cysteine 30, cysteine 34–cysteine 57, cysteine 48–cysteine 54, cysteine 53–cysteine 79, and cysteine 66–cysteine 86. The D/ECD-tripeptide signature appears at 72 to 74 (ECD). Ca(2+) contacts are provided by aspartate 74, proline 75, glutamate 77, aspartate 89, and valine 90. A disordered region spans residues 74-93 (DPAEHCTGQSSECPADVGHK).

The protein belongs to the venom metalloproteinase (M12B) family. P-III subfamily. In terms of assembly, monomer. Requires Zn(2+) as cofactor. In terms of processing, N-glycosylated. As to expression, expressed by the venom gland.

It is found in the secreted. Snake venom zinc metalloprotease that possesses hemorrhagic activity. The disintegrin-like domain has been expressed and named leucurogin. This recombinant disintegrin is able to inhibit collagen-induced platelet aggregation but not ADP- or arachidonic acid-induced platelet aggregation. Furthermore, it inhibits the adhesion of human fibroblasts to collagen type I. It also reduces adhesion and migration of human fibroblasts and inhibits migration and proliferation of human and mouse melanoma cell lines (BLM, and B16-F10-Nex2). In vitro, it inhibits the vascular structures formation by endothelial cells. In addition, it inhibits the growth of experimental Ehrlich tumor and has anti-angiogenesis effect on the sponge implant model. In vivo, when intraperitoneally injected into mice, it inhibits lung metastasis of B16F10 Nex-2 cells. In the treatment of human melanoma, grafted intradermally in the nude mice flank, it inhibits tumor growth. This Bothrops leucurus (Whitetail lancehead) protein is Zinc metalloproteinase-disintegrin-like leucurogin.